We begin with the raw amino-acid sequence, 225 residues long: Ribonuclease T (225 aa).

Residues 1-21 form a disordered region; sequence MSEDHFDDEHEGHGGGGGSRH. An Exonuclease domain is found at 33-207; the sequence is VVVDVETGGF…YDTEKTAELF (175 aa). Residues D36, E38, H194, and D199 each coordinate Mg(2+). Catalysis depends on H194, which acts as the Proton donor/acceptor.

Belongs to the RNase T family. As to quaternary structure, homodimer. Requires Mg(2+) as cofactor.

Its function is as follows. Trims short 3' overhangs of a variety of RNA species, leaving a one or two nucleotide 3' overhang. Responsible for the end-turnover of tRNA: specifically removes the terminal AMP residue from uncharged tRNA (tRNA-C-C-A). Also appears to be involved in tRNA biosynthesis. The polypeptide is Ribonuclease T (Pseudomonas savastanoi pv. phaseolicola (strain 1448A / Race 6) (Pseudomonas syringae pv. phaseolicola (strain 1448A / Race 6))).